Here is a 481-residue protein sequence, read N- to C-terminus: Trigger factor (481 aa).

The PPIase FKBP-type domain maps to 161–298; that stretch reads GDQLTATVQT…VSEIQNRQLP (138 aa). Positions 173–245 are disordered; it reads DGVPLHKLDE…PTTLIMEERR (73 aa). Residues 182 to 235 show a composition bias toward acidic residues; the sequence is EEDDDDDDDDDDDDDDDDDDDDDDDDDDDDDDDDDDDDDDDDDDDDDDDDDEGE.

Belongs to the FKBP-type PPIase family. Tig subfamily.

Its subcellular location is the cytoplasm. It carries out the reaction [protein]-peptidylproline (omega=180) = [protein]-peptidylproline (omega=0). In terms of biological role, involved in protein export. Acts as a chaperone by maintaining the newly synthesized protein in an open conformation. Functions as a peptidyl-prolyl cis-trans isomerase. This is Trigger factor from Herpetosiphon aurantiacus (strain ATCC 23779 / DSM 785 / 114-95).